The sequence spans 482 residues: Wax ester synthase/diacylglycerol acyltransferase 9 (482 aa).

Residues 1 to 195 (MEKKMKEEEE…FRLVLVVCST (195 aa)) are Cytoplasmic-facing. The active-site Proton acceptor is H140. A helical membrane pass occupies residues 196–216 (VRLIWNTLVDSFLCMATIFFL). Residues 217–328 (KDTDTPLKGK…AKGSKCRWGN (112 aa)) lie on the Lumenal side of the membrane. The chain crosses the membrane as a helical span at residues 329–349 (YISVILFPFTIALQSDPLVYL). The Cytoplasmic portion of the chain corresponds to 350 to 366 (SNVKSMIDRKKNSLITY). The helical transmembrane segment at 367-387 (IIYTFSEFVIKAFGINVAVAF) threads the bilayer. Residues 388–482 (QRKIMLNTTM…LEKGLPNHVN (95 aa)) lie on the Lumenal side of the membrane. N394 carries an N-linked (GlcNAc...) asparagine glycan.

This sequence in the N-terminal section; belongs to the long-chain O-acyltransferase family. In terms of tissue distribution, mostly expressed in stems and siliques.

The protein resides in the cell membrane. It localises to the endoplasmic reticulum membrane. The catalysed reaction is an acyl-CoA + a 1,2-diacyl-sn-glycerol = a triacyl-sn-glycerol + CoA. The enzyme catalyses a long chain fatty alcohol + a fatty acyl-CoA = a wax ester + CoA. It participates in glycerolipid metabolism; triacylglycerol biosynthesis. It functions in the pathway lipid metabolism. In terms of biological role, bifunctional wax ester synthase/diacylglycerol acyltransferase. Involved in cuticular wax biosynthesis. The sequence is that of Wax ester synthase/diacylglycerol acyltransferase 9 from Arabidopsis thaliana (Mouse-ear cress).